The primary structure comprises 138 residues: Protein A2-A3 (138 aa).

It belongs to the T5likevirus A2 protein family. As to quaternary structure, interacts with A1 protein; the two proteins form heterooligomers.

In terms of biological role, involved, together with A1 protein, in the second step transfer (SST) which allows the completion of viral DNA into the host cell. The protein is Protein A2-A3 (A2-A3) of Escherichia coli (Enterobacteria phage BF23).